The primary structure comprises 353 residues: Ion-translocating oxidoreductase complex subunit D (353 aa).

A run of 4 helical transmembrane segments spans residues 20 to 40, 44 to 64, 77 to 108, and 123 to 143; these read IMLL…YYFG, IIQV…ILHL, SALL…AIII, and PAMV…TSWL. Thr187 bears the FMN phosphoryl threonine mark. The next 4 membrane-spanning stretches (helical) occupy residues 214–234, 242–262, 267–287, and 301–318; these read VIAG…GVFL, WHIP…GWLL, LVTP…FFIA, and LLYG…RSYG.

This sequence belongs to the NqrB/RnfD family. In terms of assembly, the complex is composed of six subunits: RnfA, RnfB, RnfC, RnfD, RnfE and RnfG. FMN is required as a cofactor.

The protein localises to the cell inner membrane. Part of a membrane-bound complex that couples electron transfer with translocation of ions across the membrane. In Erwinia tasmaniensis (strain DSM 17950 / CFBP 7177 / CIP 109463 / NCPPB 4357 / Et1/99), this protein is Ion-translocating oxidoreductase complex subunit D.